The sequence spans 141 residues: Ribonuclease P protein component (141 aa).

2 disordered regions span residues 37 to 56 (RTEE…VGFT) and 114 to 141 (RRIT…VNGK). The segment covering 114-124 (RRITAKGERRS) has biased composition (basic and acidic residues).

This sequence belongs to the RnpA family. In terms of assembly, consists of a catalytic RNA component (M1 or rnpB) and a protein subunit.

It catalyses the reaction Endonucleolytic cleavage of RNA, removing 5'-extranucleotides from tRNA precursor.. Functionally, RNaseP catalyzes the removal of the 5'-leader sequence from pre-tRNA to produce the mature 5'-terminus. It can also cleave other RNA substrates such as 4.5S RNA. The protein component plays an auxiliary but essential role in vivo by binding to the 5'-leader sequence and broadening the substrate specificity of the ribozyme. In Brucella melitensis biotype 2 (strain ATCC 23457), this protein is Ribonuclease P protein component.